Reading from the N-terminus, the 517-residue chain is Cytochrome P450 monooxygenase 124 (517 aa).

The helical transmembrane segment at 3–23 (SLLVLFVSLLALGALKKHLDF) threads the bilayer. Heme is bound at residue Cys453.

The protein belongs to the cytochrome P450 family. Heme serves as cofactor.

Its subcellular location is the membrane. It functions in the pathway secondary metabolite biosynthesis. Its function is as follows. Cytochrome P450 monooxygenase that is able to use trans-stilbene as a substrate for oxidation. In Postia placenta (strain ATCC 44394 / Madison 698-R) (Brown rot fungus), this protein is Cytochrome P450 monooxygenase 124.